We begin with the raw amino-acid sequence, 330 residues long: MQTLAQHLTSKAVNESLSQLILTLADTSKAISHAVRHGALAGVLGATEQENVQGETQKKLDIITNDMLKDALKADGTVRGLASEEEDHVVEVCANGQYLVCFDPLDGSSNIDINSLVGTIFSVLPAPQGELTETSFLQSGRNQLAAGYVLYGPSTMLALTTGQGVQLFTLHPETNEFLLTNAAMSISPDTQEFAINMSNQRFWEAPMQTYIADLLLGKIGPREKSFNMRWIAAMVGDVHRVLSRGGIFTYPTDNKDPKKPYKLRLMYEANPMALLVEQAGGKASTGYETILDIQPTQIHQRVAVILGSANEVDACLSYHGLDYSEEPSLD.

4 residues coordinate Mg(2+): glutamate 84, aspartate 103, leucine 105, and aspartate 106. Residues 106 to 109 (DGSS), asparagine 196, and lysine 262 contribute to the substrate site. A Mg(2+)-binding site is contributed by glutamate 268.

Belongs to the FBPase class 1 family. As to quaternary structure, homotetramer. Requires Mg(2+) as cofactor.

The protein localises to the cytoplasm. The enzyme catalyses beta-D-fructose 1,6-bisphosphate + H2O = beta-D-fructose 6-phosphate + phosphate. Its pathway is carbohydrate biosynthesis; gluconeogenesis. In Shewanella sp. (strain ANA-3), this protein is Fructose-1,6-bisphosphatase class 1.